The sequence spans 158 residues: Transcription elongation factor GreA (158 aa).

Positions 46–66 (AEYEAAKERQGFIEGRISELE) form a coiled coil.

Belongs to the GreA/GreB family.

In terms of biological role, necessary for efficient RNA polymerase transcription elongation past template-encoded arresting sites. The arresting sites in DNA have the property of trapping a certain fraction of elongating RNA polymerases that pass through, resulting in locked ternary complexes. Cleavage of the nascent transcript by cleavage factors such as GreA or GreB allows the resumption of elongation from the new 3'terminus. GreA releases sequences of 2 to 3 nucleotides. The sequence is that of Transcription elongation factor GreA from Neisseria meningitidis serogroup A / serotype 4A (strain DSM 15465 / Z2491).